Here is a 37-residue protein sequence, read N- to C-terminus: Large ribosomal subunit protein bL36 (37 aa).

This sequence belongs to the bacterial ribosomal protein bL36 family.

The protein is Large ribosomal subunit protein bL36 of Shewanella baltica (strain OS223).